The sequence spans 388 residues: 1-deoxy-D-xylulose 5-phosphate reductoisomerase (388 aa).

Positions 10, 11, 12, 13, 37, and 121 each coordinate NADPH. K122 is a 1-deoxy-D-xylulose 5-phosphate binding site. E123 is an NADPH binding site. D147 lines the Mn(2+) pocket. S148, E149, S173, and H196 together coordinate 1-deoxy-D-xylulose 5-phosphate. Mn(2+) is bound at residue E149. G202 serves as a coordination point for NADPH. Positions 209, 214, 215, and 218 each coordinate 1-deoxy-D-xylulose 5-phosphate. Residue E218 participates in Mn(2+) binding.

It belongs to the DXR family. Mg(2+) is required as a cofactor. It depends on Mn(2+) as a cofactor.

It carries out the reaction 2-C-methyl-D-erythritol 4-phosphate + NADP(+) = 1-deoxy-D-xylulose 5-phosphate + NADPH + H(+). It functions in the pathway isoprenoid biosynthesis; isopentenyl diphosphate biosynthesis via DXP pathway; isopentenyl diphosphate from 1-deoxy-D-xylulose 5-phosphate: step 1/6. Functionally, catalyzes the NADPH-dependent rearrangement and reduction of 1-deoxy-D-xylulose-5-phosphate (DXP) to 2-C-methyl-D-erythritol 4-phosphate (MEP). This chain is 1-deoxy-D-xylulose 5-phosphate reductoisomerase, found in Lachnoclostridium phytofermentans (strain ATCC 700394 / DSM 18823 / ISDg) (Clostridium phytofermentans).